The primary structure comprises 282 residues: NH(3)-dependent NAD(+) synthetase (282 aa).

51 to 58 serves as a coordination point for ATP; the sequence is GISGGVDS. Residue Asp57 coordinates Mg(2+). Arg148 lines the deamido-NAD(+) pocket. Residue Thr168 coordinates ATP. A Mg(2+)-binding site is contributed by Glu173. Deamido-NAD(+) contacts are provided by Lys181 and Asp188. ATP is bound by residues Lys197 and Thr219. Residue 268–269 coordinates deamido-NAD(+); it reads HK.

Belongs to the NAD synthetase family. As to quaternary structure, homodimer.

The enzyme catalyses deamido-NAD(+) + NH4(+) + ATP = AMP + diphosphate + NAD(+) + H(+). The protein operates within cofactor biosynthesis; NAD(+) biosynthesis; NAD(+) from deamido-NAD(+) (ammonia route): step 1/1. Functionally, catalyzes the ATP-dependent amidation of deamido-NAD to form NAD. Uses ammonia as a nitrogen source. This Burkholderia ambifaria (strain MC40-6) protein is NH(3)-dependent NAD(+) synthetase.